We begin with the raw amino-acid sequence, 156 residues long: Endoribonuclease YbeY (156 aa).

The Zn(2+) site is built by H122, H126, and H132.

It belongs to the endoribonuclease YbeY family. Zn(2+) is required as a cofactor.

Its subcellular location is the cytoplasm. Functionally, single strand-specific metallo-endoribonuclease involved in late-stage 70S ribosome quality control and in maturation of the 3' terminus of the 16S rRNA. In Geobacillus sp. (strain WCH70), this protein is Endoribonuclease YbeY.